The sequence spans 494 residues: Solute carrier family 2, facilitated glucose transporter member 3 (494 aa).

At 1–10 the chain is on the cytoplasmic side; the sequence is MGTTKVTPYL. Residues 11–32 traverse the membrane as a helical segment; it reads IFATSVAAIGSFQFGYNTGVIN. The Extracellular segment spans residues 33 to 64; it reads APEMIIRDFLNYTLDEKLDEPPSRLLLTNLWS. N-linked (GlcNAc...) asparagine glycosylation occurs at asparagine 43. Residues 65–84 form a helical membrane-spanning segment; it reads LSVAIFSVGGMIGSFSVGLF. Topologically, residues 85–89 are cytoplasmic; the sequence is NRFGR. A helical membrane pass occupies residues 90 to 110; it reads RNSMLIVNLLAVIGGCLMGFC. The Extracellular segment spans residues 111–117; it reads KISESVE. A helical membrane pass occupies residues 118 to 141; it reads MLILGRLVIGVFCGLCTGFVPMYI. Over 142-152 the chain is Cytoplasmic; it reads GEISPTALRGA. The chain crosses the membrane as a helical span at residues 153–173; that stretch reads FGTLNQLGIVIGILVAQIFGL. Glutamine 158 lines the D-glucose pocket. Over 174–182 the chain is Extracellular; that stretch reads EIILGSEVL. The helical transmembrane segment at 183–203 threads the bilayer; it reads WPVLLGFTIIPAILQSAALPF. The Cytoplasmic segment spans residues 204 to 268; the sequence is CPESPRFLLI…LFRAPSYRQP (65 aa). Position 231 is a phosphothreonine (threonine 231). The chain crosses the membrane as a helical span at residues 269-289; it reads IIISIVLQLSQQLSGINAVFY. The important for selectivity against fructose stretch occupies residues 276-278; it reads QLS. Residues 279 to 280 and asparagine 285 contribute to the D-glucose site; that span reads QQ. Residues 290–303 are Extracellular-facing; it reads YSTGIFKDAGVKEP. Residues 304-324 form a helical membrane-spanning segment; sequence IYATIGAGVVNTIFTIVSVFL. Position 314 (asparagine 314) interacts with D-glucose. At 325 to 330 the chain is on the cytoplasmic side; sequence VERAGR. A helical membrane pass occupies residues 331–351; it reads RTLHLIGLGGMALCSVLMTVS. Residues 352–362 lie on the Extracellular side of the membrane; the sequence is LLLKDKYDTMS. The chain crosses the membrane as a helical span at residues 363-388; the sequence is LVCIAAILIYVAFFEIGPGPIPWFIV. The D-glucose site is built by glutamate 377 and tryptophan 385. Over 389 to 398 the chain is Cytoplasmic; the sequence is AELFSQGPRP. Residues 399–419 form a helical membrane-spanning segment; it reads AAMAVAGCSNWTSNFLVGLLF. Residues 420–428 are Extracellular-facing; the sequence is PSAAYYLGA. The helical transmembrane segment at 429–449 threads the bilayer; the sequence is YVFVIFAVFLVAFFIFTFFKV. Residues 450–494 lie on the Cytoplasmic side of the membrane; the sequence is PETRGRTFEDITRAFEGQAAEANKLGKGPTMEMNSIQPIETTTHV. Position 484 is a phosphoserine (serine 484). Threonine 491 carries the post-translational modification Phosphothreonine.

This sequence belongs to the major facilitator superfamily. Sugar transporter (TC 2.A.1.1) family. Glucose transporter subfamily. Interacts with SMIM43; the interaction may promote SLC2A3-mediated glucose transport to meet the energy needs of mesendoderm differentiation. In terms of tissue distribution, detected in stomach, placenta, lung and brain.

It is found in the cell membrane. The protein localises to the perikaryon. It localises to the cell projection. The catalysed reaction is D-glucose(out) = D-glucose(in). It catalyses the reaction D-galactose(in) = D-galactose(out). Deoxyglucose transport is inhibited by D-glucose, D-galactose and maltose. Galactose transport is inhibited by D-glucose and maltose. Facilitative glucose transporter. Can also mediate the uptake of various other monosaccharides across the cell membrane. Mediates the uptake of glucose, 2-deoxyglucose, galactose, mannose, xylose and fucose, and probably also dehydroascorbate. Does not mediate fructose transport. Required for mesendoderm differentiation. This chain is Solute carrier family 2, facilitated glucose transporter member 3, found in Oryctolagus cuniculus (Rabbit).